Reading from the N-terminus, the 136-residue chain is Small ribosomal subunit protein uS8c (136 aa).

It belongs to the universal ribosomal protein uS8 family. As to quaternary structure, part of the 30S ribosomal subunit.

The protein resides in the plastid. Its subcellular location is the chloroplast. Functionally, one of the primary rRNA binding proteins, it binds directly to 16S rRNA central domain where it helps coordinate assembly of the platform of the 30S subunit. In Morus indica (Mulberry), this protein is Small ribosomal subunit protein uS8c (rps8).